Consider the following 95-residue polypeptide: Acylphosphatase (95 aa).

In terms of domain architecture, Acylphosphatase-like spans 8–95; the sequence is RVSARITGRV…DAFEGFRVRR (88 aa). Catalysis depends on residues arginine 23 and asparagine 41.

It belongs to the acylphosphatase family.

The catalysed reaction is an acyl phosphate + H2O = a carboxylate + phosphate + H(+). The chain is Acylphosphatase (acyP) from Salinibacter ruber (strain DSM 13855 / M31).